The chain runs to 985 residues: Phosphoenolpyruvate carboxylase (985 aa).

Positions 1–17 are enriched in low complexity; the sequence is MTQSAARRASSRATPAR. The disordered stretch occupies residues 1–55; that stretch reads MTQSAARRASSRATPARKTPPAPASQTPAPSPGGTAGTALGPTSRRSSGSAAAKD. Catalysis depends on residues H193 and K634.

This sequence belongs to the PEPCase type 1 family. Mg(2+) is required as a cofactor.

The enzyme catalyses oxaloacetate + phosphate = phosphoenolpyruvate + hydrogencarbonate. Functionally, forms oxaloacetate, a four-carbon dicarboxylic acid source for the tricarboxylic acid cycle. The sequence is that of Phosphoenolpyruvate carboxylase from Ralstonia nicotianae (strain ATCC BAA-1114 / GMI1000) (Ralstonia solanacearum).